Consider the following 465-residue polypeptide: Cysteine--tRNA ligase (465 aa).

A Zn(2+)-binding site is contributed by cysteine 30. The 'HIGH' region motif lies at 32-42 (ITVYDYCHVGH). Zn(2+) is bound by residues cysteine 214, histidine 239, and glutamate 243. The 'KMSKS' region signature appears at 271 to 275 (KMSKS). Lysine 274 lines the ATP pocket.

The protein belongs to the class-I aminoacyl-tRNA synthetase family. As to quaternary structure, monomer. The cofactor is Zn(2+).

It is found in the cytoplasm. The catalysed reaction is tRNA(Cys) + L-cysteine + ATP = L-cysteinyl-tRNA(Cys) + AMP + diphosphate. In Burkholderia ambifaria (strain ATCC BAA-244 / DSM 16087 / CCUG 44356 / LMG 19182 / AMMD) (Burkholderia cepacia (strain AMMD)), this protein is Cysteine--tRNA ligase.